A 1331-amino-acid polypeptide reads, in one-letter code: Sodium-dependent transporter bedraggled (1331 aa).

The disordered stretch occupies residues 1 to 62; it reads MSSKEQQAAG…QLEHEQFGLS (62 aa). The segment covering 16 to 25 has biased composition (polar residues); the sequence is NSNAYSSLPP. Residues 28–43 are compositionally biased toward gly residues; the sequence is TGAGCSGAALGSGTGT. A glycan (N-linked (GlcNAc...) asparagine) is linked at Asn-168. Disordered stretches follow at residues 221–284 and 363–473; these read EPRT…TEPV and QTNA…SASS. Residues 258-282 are compositionally biased toward polar residues; the sequence is KTFSCSLRPTSQIASSSGSLETSTE. The segment covering 369–383 has biased composition (basic and acidic residues); it reads SSEEPRPRQYGRRLE. The segment covering 413 to 436 has biased composition (polar residues); that stretch reads LQDTPTHPIMSTCSELSSARSSRM. A compositionally biased stretch (low complexity) spans 437 to 453; sequence PSPVSLPSDSSSSGSSS. Polar residues predominate over residues 463-473; it reads VQTTTMCSASS. The next 3 helical transmembrane spans lie at 505–525, 531–551, and 567–587; these read LALI…VLTI, FLLQ…WLQM, and ISPI…FLAL. Residues Asn-627 and Asn-631 are each glycosylated (N-linked (GlcNAc...) asparagine). A run of 4 helical transmembrane segments spans residues 667–687, 696–716, 741–761, and 778–798; these read QLAF…CKGL, IIYT…VYVV, TAAT…VIAI, and AILL…LALC. A glycan (N-linked (GlcNAc...) asparagine) is linked at Asn-857. Residues 890–910 traverse the membrane as a helical segment; that stretch reads WVWAAVAFATFAGFGLAQLCV. N-linked (GlcNAc...) asparagine glycosylation is present at Asn-921. The next 4 membrane-spanning stretches (helical) occupy residues 926–946, 956–976, 998–1018, and 1044–1064; these read VLLS…EMGI, LGGS…VFLI, AFLA…LSVV, and MGSL…IIQI. 3 disordered regions span residues 1086 to 1136, 1169 to 1238, and 1256 to 1275; these read PEEG…SYTT, SLDA…ASTL, and VRHR…TLPR. Composition is skewed to polar residues over residues 1097–1115 and 1186–1196; these read ARQT…TTEG and ILTNPAGSSFN. The segment covering 1197–1209 has biased composition (low complexity); sequence ADPSPASSSSPES.

Belongs to the sodium:neurotransmitter symporter (SNF) (TC 2.A.22) family.

The protein localises to the membrane. Functionally, putative sodium-dependent transporter which is required for viability, early imaginal disk development and adult motor coordination. Also has a role in the fate commitment of the R3/R4 photoreceptor cells. May function in ommatidial polarity by regulating the activity of the core polarity genes, acting upstream of (or in parallel to) Vang, dsh, pk, stan, and dgo, but downstream or independently of fz. The chain is Sodium-dependent transporter bedraggled from Drosophila melanogaster (Fruit fly).